The following is a 169-amino-acid chain: Aspartic protease inhibitor 6 (169 aa).

N-linked (GlcNAc...) asparagine glycosylation is present at N1. 2 cysteine pairs are disulfide-bonded: C30–C75 and C124–C134.

Belongs to the protease inhibitor I3 (leguminous Kunitz-type inhibitor) family.

It is found in the vacuole. Its function is as follows. Inhibitor of cathepsin D (aspartic protease). May also inhibit trypsin and chymotrypsin (serine proteases). Protects the plant by inhibiting proteases of invading organisms. In Solanum tuberosum (Potato), this protein is Aspartic protease inhibitor 6.